A 142-amino-acid polypeptide reads, in one-letter code: MMSFVSLLLVGILFHATQAEQLTKCEVFRELKDLKGYGGVSLPEWVCTTFHTSGYDTQAIVQNNDSTEYGLFQINNKIWCKDDQNPHSSDICNISCDKFLDDDLTDDIMCVKKILDKVGINYWLAHKALCSEKLDQWLCEKL.

The N-terminal stretch at 1-19 is a signal peptide; sequence MMSFVSLLLVGILFHATQA. The 123-residue stretch at 20 to 142 folds into the C-type lysozyme domain; sequence EQLTKCEVFR…KLDQWLCEKL (123 aa). 4 cysteine pairs are disulfide-bonded: Cys-25/Cys-139, Cys-47/Cys-130, Cys-80/Cys-96, and Cys-92/Cys-110. N-linked (GlcNAc...) asparagine glycans are attached at residues Asn-64 and Asn-93. Ca(2+) is bound by residues Lys-98, Asp-101, Asp-103, Asp-106, and Asp-107.

This sequence belongs to the glycosyl hydrolase 22 family. As to quaternary structure, lactose synthase (LS) is a heterodimer of a catalytic component, beta1,4-galactosyltransferase (beta4Gal-T1) and a regulatory component, alpha-lactalbumin (LA). Mammary gland specific. Secreted in milk.

Its subcellular location is the secreted. Regulatory subunit of lactose synthase, changes the substrate specificity of galactosyltransferase in the mammary gland making glucose a good acceptor substrate for this enzyme. This enables LS to synthesize lactose, the major carbohydrate component of milk. In other tissues, galactosyltransferase transfers galactose onto the N-acetylglucosamine of the oligosaccharide chains in glycoproteins. The chain is Alpha-lactalbumin (LALBA) from Bos mutus grunniens (Wild yak).